A 227-amino-acid polypeptide reads, in one-letter code: Probable GTP-binding protein EngB (227 aa).

One can recognise an EngB-type G domain in the interval 30 to 219; it reads KKPQIIVVGR…MVKINKNVNE (190 aa). GTP is bound by residues 38–45, 63–67, 80–83, 160–163, and 197–199; these read GRSNVGKS, GVTLK, DLPG, NKMD, and IGI. Residues Ser45 and Thr65 each contribute to the Mg(2+) site.

This sequence belongs to the TRAFAC class TrmE-Era-EngA-EngB-Septin-like GTPase superfamily. EngB GTPase family. Mg(2+) serves as cofactor.

Functionally, necessary for normal cell division and for the maintenance of normal septation. This chain is Probable GTP-binding protein EngB, found in Methanococcus aeolicus (strain ATCC BAA-1280 / DSM 17508 / OCM 812 / Nankai-3).